The sequence spans 168 residues: T-cell surface glycoprotein CD3 delta chain (168 aa).

An N-terminal signal peptide occupies residues 1-21; that stretch reads MEHSRFLSCLILAALLSQVNP. The Extracellular portion of the chain corresponds to 22-102; that stretch reads RILKVLEPED…CVELDTATLA (81 aa). Cysteine 37 and cysteine 74 are disulfide-bonded. 2 N-linked (GlcNAc...) asparagine glycosylation sites follow: asparagine 38 and asparagine 56. A helical membrane pass occupies residues 103-123; sequence GMIITDIIATVLLALGVYCFA. Residues 124–168 lie on the Cytoplasmic side of the membrane; it reads GHETGRFSRAADTQALMGNDQLYQPLRERNDAQYSRLGDKWARNK. An ITAM domain is found at 135-163; it reads DTQALMGNDQLYQPLRERNDAQYSRLGDK. Phosphotyrosine occurs at positions 146 and 157.

As to quaternary structure, the TCR-CD3 complex is composed of a CD3D/CD3E and a CD3G/CD3E heterodimers that preferentially associate with TCRalpha and TCRbeta, respectively, to form TCRalpha/CD3E/CD3G and TCRbeta/CD3G/CD3E trimers. In turn, the hexamer interacts with CD3Z homodimer to form the TCR-CD3 complex. Alternatively, TCRalpha and TCRbeta can be replaced by TCRgamma and TCRdelta. Interacts with coreceptors CD4 and CD8. Phosphorylated on Tyr residues after T-cell receptor triggering by LCK in association with CD4/CD8. CD3D is mostly present on T-lymphocytes with its TCR-CD3 partners. Present also in fetal NK-cells.

The protein localises to the cell membrane. In terms of biological role, part of the TCR-CD3 complex present on T-lymphocyte cell surface that plays an essential role in adaptive immune response. When antigen presenting cells (APCs) activate T-cell receptor (TCR), TCR-mediated signals are transmitted across the cell membrane by the CD3 chains CD3D, CD3E, CD3G and CD3Z. All CD3 chains contain immunoreceptor tyrosine-based activation motifs (ITAMs) in their cytoplasmic domain. Upon TCR engagement, these motifs become phosphorylated by Src family protein tyrosine kinases LCK and FYN, resulting in the activation of downstream signaling pathways. In addition of this role of signal transduction in T-cell activation, CD3D plays an essential role in thymocyte differentiation. Indeed, participates in correct intracellular TCR-CD3 complex assembly and surface expression. In absence of a functional TCR-CD3 complex, thymocytes are unable to differentiate properly. Interacts with CD4 and CD8 and thus serves to establish a functional link between the TCR and coreceptors CD4 and CD8, which is needed for activation and positive selection of CD4 or CD8 T-cells. The protein is T-cell surface glycoprotein CD3 delta chain (CD3D) of Bos taurus (Bovine).